The primary structure comprises 336 residues: Dihydroorotate dehydrogenase (quinone) (336 aa).

Residues alanine 62–lysine 66 and threonine 86 contribute to the FMN site. Lysine 66 provides a ligand contact to substrate. Asparagine 111–phenylalanine 115 contributes to the substrate binding site. Asparagine 139 and asparagine 172 together coordinate FMN. Residue asparagine 172 coordinates substrate. Serine 175 (nucleophile) is an active-site residue. A substrate-binding site is contributed by asparagine 177. Residues lysine 217 and threonine 245 each contribute to the FMN site. Residue asparagine 246–threonine 247 participates in substrate binding. FMN contacts are provided by residues glycine 268, glycine 297, and tyrosine 318–serine 319.

This sequence belongs to the dihydroorotate dehydrogenase family. Type 2 subfamily. As to quaternary structure, monomer. FMN serves as cofactor.

The protein localises to the cell membrane. It catalyses the reaction (S)-dihydroorotate + a quinone = orotate + a quinol. The protein operates within pyrimidine metabolism; UMP biosynthesis via de novo pathway; orotate from (S)-dihydroorotate (quinone route): step 1/1. Catalyzes the conversion of dihydroorotate to orotate with quinone as electron acceptor. This Vibrio vulnificus (strain CMCP6) protein is Dihydroorotate dehydrogenase (quinone).